A 205-amino-acid polypeptide reads, in one-letter code: Ribonuclease HII (205 aa).

One can recognise an RNase H type-2 domain in the interval 15–205 (SRVCGIDEAG…SFKLRKLGEK (191 aa)). Asp21, Glu22, and Asp117 together coordinate a divalent metal cation.

It belongs to the RNase HII family. The cofactor is Mn(2+). It depends on Mg(2+) as a cofactor.

Its subcellular location is the cytoplasm. The enzyme catalyses Endonucleolytic cleavage to 5'-phosphomonoester.. Endonuclease that specifically degrades the RNA of RNA-DNA hybrids. The chain is Ribonuclease HII from Chlorobaculum parvum (strain DSM 263 / NCIMB 8327) (Chlorobium vibrioforme subsp. thiosulfatophilum).